The following is a 382-amino-acid chain: Galactokinase (382 aa).

34–37 is a binding site for substrate; it reads EHTD. 124–130 serves as a coordination point for ATP; that stretch reads GAGLSSS. Mg(2+) is bound by residues Ser-130 and Glu-162. Asp-174 (proton acceptor) is an active-site residue. Residue Tyr-223 participates in substrate binding.

This sequence belongs to the GHMP kinase family. GalK subfamily.

The protein resides in the cytoplasm. The enzyme catalyses alpha-D-galactose + ATP = alpha-D-galactose 1-phosphate + ADP + H(+). Its pathway is carbohydrate metabolism; galactose metabolism. Its function is as follows. Catalyzes the transfer of the gamma-phosphate of ATP to D-galactose to form alpha-D-galactose-1-phosphate (Gal-1-P). The polypeptide is Galactokinase (Salmonella paratyphi A (strain ATCC 9150 / SARB42)).